Here is a 1957-residue protein sequence, read N- to C-terminus: Sporulation-specific protein 15 (1957 aa).

Low complexity-rich tracts occupy residues 1–12 and 19–28; these read MSNQSSSGSNTS and ASSLVSSAAS. Positions 1–102 are disordered; the sequence is MSNQSSSGSN…STASSALPLT (102 aa). The span at 58 to 83 shows a compositional bias: basic and acidic residues; sequence SQHEDSSEELKRQEVRGMRRHSDLSI. A compositionally biased stretch (polar residues) spans 90 to 102; it reads SEGSTASSALPLT. Ser105 is subject to Phosphoserine. Coiled-coil stretches lie at residues 199-785, 804-1235, 1320-1471, and 1481-1723; these read KQSE…FTSL, VNMQ…DLLD, KVVA…SLDD, and EKLG…EQHE.

The protein belongs to the MPC70 family. In terms of assembly, monomer.

It localises to the cytoplasm. Its subcellular location is the cytoskeleton. The protein resides in the microtubule organizing center. The protein localises to the spindle pole body. Has a role in the initiation of spore membrane formation. The chain is Sporulation-specific protein 15 (spo15) from Schizosaccharomyces pombe (strain 972 / ATCC 24843) (Fission yeast).